The following is a 370-amino-acid chain: Serine/threonine-protein kinase SAPK5 (370 aa).

Residues 4–260 (YEPVREIGAG…MGEIKSHPWF (257 aa)) enclose the Protein kinase domain. Residues 10-18 (IGAGNFGVA) and Lys-33 each bind ATP. The active-site Proton acceptor is Asp-123. A disordered region spans residues 312–370 (EAQTVPKPDKPVSGYGWGTDDDDDDQQPAEEEDEEDDYDRTVREVHASVDLDMSNLQIS). The span at 330-349 (TDDDDDDQQPAEEEDEEDDY) shows a compositional bias: acidic residues. Positions 350 to 360 (DRTVREVHASV) are enriched in basic and acidic residues.

This sequence belongs to the protein kinase superfamily. Ser/Thr protein kinase family. May be phosphorylated. In terms of tissue distribution, expressed in leaf blades, leaf sheaths and roots. Expressed in shoots and roots of young seedlings.

It localises to the cytoplasm. The protein localises to the nucleus. It catalyses the reaction L-seryl-[protein] + ATP = O-phospho-L-seryl-[protein] + ADP + H(+). The enzyme catalyses L-threonyl-[protein] + ATP = O-phospho-L-threonyl-[protein] + ADP + H(+). Activated by hyperosmotic stress. In terms of biological role, may play a role in signal transduction of hyperosmotic response. The chain is Serine/threonine-protein kinase SAPK5 (SAPK5) from Oryza sativa subsp. japonica (Rice).